Consider the following 565-residue polypeptide: Wee1-like protein kinase 2 (565 aa).

Composition is skewed to basic and acidic residues over residues 1–12 (MGDNGDNKELKQ) and 26–52 (EGQK…DSEA). 2 disordered regions span residues 1–142 (MGDN…TPGP) and 169–189 (KSNG…EEGK). Phosphoserine is present on Ser77. The short motif at 173–175 (KRK) is the Nuclear localization signal element. A compositionally biased stretch (basic and acidic residues) spans 178–189 (RDLEEAGPEEGK). A Protein kinase domain is found at 214 to 492 (FLEVEKIGVG…TRSRVLCPSL (279 aa)). Residues 220 to 228 (IGVGEFGTV) and Lys243 each bind ATP. The Nuclear export signal signature appears at 317-331 (KLKDILLQISLGLKY). Residue Asp341 is the Proton acceptor of the active site. Positions 346 and 382 each coordinate Mg(2+). Positions 495-521 (TEELQQQLNLEKFKTATLERELKEVQR) form a coiled coil. A disordered region spans residues 518–565 (EVQRAQSSKEGQSSPGVTGTHTGSRSTRRLVGGKSAKSSSFTWGQSSP). Polar residues-rich tracts occupy residues 521 to 534 (RAQS…SPGV) and 553 to 565 (AKSS…QSSP).

This sequence belongs to the protein kinase superfamily. Ser/Thr protein kinase family. WEE1 subfamily. Phosphorylation leads to increase its activity. In terms of tissue distribution, ovary-specific.

It localises to the nucleus. The catalysed reaction is L-tyrosyl-[protein] + ATP = O-phospho-L-tyrosyl-[protein] + ADP + H(+). Oocyte-specific protein tyrosine kinase that phosphorylates and inhibits CDK1 and acts as a key regulator of meiosis during both prophase I and metaphase II. Required to maintain meiotic arrest in oocytes during the germinal vesicle (GV) stage, a long period of quiescence at dictyate prophase I, by phosphorylating CDK1 at 'Tyr-15', leading to inhibit CDK1 activity and prevent meiotic reentry. Also required for metaphase II exit during egg activation by phosphorylating CDK1 at 'Tyr-15', to ensure exit from meiosis in oocytes and promote pronuclear formation. The sequence is that of Wee1-like protein kinase 2 (WEE2) from Sus scrofa (Pig).